Consider the following 235-residue polypeptide: Transmembrane protein 215 (235 aa).

Transmembrane regions (helical) follow at residues 12 to 32 (LVVA…VSGM) and 40 to 60 (IPLL…IALA). Residues 99 to 146 (SDLESGKGSSDELAKKAGLRGKQLPQGPGEVPMASSVTTPTPTEEGEC) are disordered.

The protein resides in the membrane. This is Transmembrane protein 215 (Tmem215) from Mus musculus (Mouse).